A 28-amino-acid chain; its full sequence is 50 kDa venom protease (28 aa).

The protein belongs to the venom metalloproteinase (M12B) family. The cofactor is Zn(2+). Expressed by the venom gland.

The protein resides in the secreted. This is 50 kDa venom protease from Proatheris superciliaris (Lowland swamp viper).